We begin with the raw amino-acid sequence, 46 residues long: Toxin PhcrTx2 (46 aa).

Intrachain disulfides connect cysteine 4–cysteine 40, cysteine 6–cysteine 32, and cysteine 22–cysteine 41.

It belongs to the sea anemone type 3 (BDS) potassium channel toxin family.

It localises to the secreted. Its subcellular location is the nematocyst. Its function is as follows. Neurotoxin that induces paralysis (but not death) to U.thayeri crabs. Partially and reversibly inhibits glutamate-evoked peak currents (IC(50)=4.7 uM) but not voltage-gated potassium channel currents in cultured isolated neurons from the land snail H.aspersa. Weakly inhibits voltage-gated potassium peak currents (IC(50)=6.4 uM) and steady-state currents (IC(50)=8.2 uM) in rat dorsal root ganglion (DRG) neurons. Weakly inhibits voltage-gated sodium currents in rat DRG neurons (IC(50)=0.9 uM). The chain is Toxin PhcrTx2 from Phymanthus crucifer (Red beaded anemone).